We begin with the raw amino-acid sequence, 654 residues long: DNA-directed RNA polymerase III subunit RPC3 (654 aa).

A Phosphothreonine modification is found at T27. Disordered regions lie at residues 381-401 (LSRK…ASLP) and 422-448 (KSLQ…EDPH). S392 and S394 each carry phosphoserine. The segment covering 429–444 (DTQEEDEEEEDLDADT) has biased composition (acidic residues). The leucine-zipper stretch occupies residues 581-602 (LEWNMANLLFKKEKLKQENSTL).

This sequence belongs to the eukaryotic RPC3/POLR3C RNA polymerase subunit family. Component of the RNA polymerase III (Pol III) complex consisting of 17 subunits.

It is found in the cytoplasm. The protein resides in the nucleus. In terms of biological role, DNA-dependent RNA polymerase catalyzes the transcription of DNA into RNA using the four ribonucleoside triphosphates as substrates. Specific core component of RNA polymerase III which synthesizes small RNAs, such as 5S rRNA and tRNAs. The protein is DNA-directed RNA polymerase III subunit RPC3 (RPC82) of Saccharomyces cerevisiae (strain ATCC 204508 / S288c) (Baker's yeast).